Reading from the N-terminus, the 509-residue chain is Probable cytochrome P450 6a14 (509 aa).

Heme is bound at residue Cys-454.

The protein belongs to the cytochrome P450 family. It depends on heme as a cofactor.

It localises to the endoplasmic reticulum membrane. It is found in the microsome membrane. May be involved in the metabolism of insect hormones and in the breakdown of synthetic insecticides. The sequence is that of Probable cytochrome P450 6a14 (Cyp6a14) from Drosophila melanogaster (Fruit fly).